We begin with the raw amino-acid sequence, 725 residues long: MTLSDSDLELITTELGRELTPAEAALFENLWSEHCAYRSSRPLLQSFTTGDDSANDEGAEHVVIGPGDDAAVVRLPRVDEASETPIYITMGIESHNHPSYVDPYDGAATGVGGIVRDTLSMGAYPIALADSLYFGSFDRERTQYLLDGVVEGIADYGNAIGVPTVAGSVEFHNKYTGNPLVNVACIGLLTDERLVTAEAQSPGNKLVLVGNATGRDGLGGASFASEDLSEDAETEDRPAVQVGDPYTEKRLIEANEELITAELIQSARDLGAAGLGGASSELVAKGGLGARINLERVHQREPAMNAMEILLAESQERMCYEVHPDDVETVGDIAAKYDLGYAVIGEIRDGNYVCTFGDETVVDVPAGFLADGAPMNDLSATEPPTPEESTFPAIDAATAFNTIISTPNTASKRWIYRQYDHEVGLRTAMRPGDDAALIAIREAGVGLALSSGAVPAWTESNPYKGAQAVALENATNVAAKGATPIAAVDCLNGGNPEKPAVYGAFKDIVQGLADMCHTLSIPVVGGNVSLYNDSTSGPIPPTPTLALVGTKKTFDAPPAALTGDGTLLLVGHQSNNLGGSELLAQIGGTDKFPALPSNPTAVVDSLARVANHPSTLATHDVSTGGLAVTLAELITSDAGARVTVQNKTSLFTETPGRAVIETTDPDAVRHIFEGVAPVVSLGDTTTDGTLTINIDDEDTANESPAVTTDAATVAKQRRILEDALE.

The active site involves histidine 34. An ATP-binding site is contributed by tyrosine 37. Position 93 (glutamate 93) interacts with Mg(2+). Residues 94 to 97 (SHNH) and arginine 116 contribute to the substrate site. Histidine 95 serves as the catalytic Proton acceptor. Aspartate 117 is a Mg(2+) binding site. Positions 220–241 (GASFASEDLSEDAETEDRPAVQ) are disordered. Substrate is bound at residue glutamine 241. Residue aspartate 269 participates in Mg(2+) binding. Substrate is bound at residue 313–315 (ESQ). Positions 489 and 526 each coordinate ATP. Asparagine 527 serves as a coordination point for Mg(2+). Substrate is bound at residue serine 529.

This sequence belongs to the FGAMS family. Monomer. Part of the FGAM synthase complex composed of 1 PurL, 1 PurQ and 2 PurS subunits.

It is found in the cytoplasm. It carries out the reaction N(2)-formyl-N(1)-(5-phospho-beta-D-ribosyl)glycinamide + L-glutamine + ATP + H2O = 2-formamido-N(1)-(5-O-phospho-beta-D-ribosyl)acetamidine + L-glutamate + ADP + phosphate + H(+). Its pathway is purine metabolism; IMP biosynthesis via de novo pathway; 5-amino-1-(5-phospho-D-ribosyl)imidazole from N(2)-formyl-N(1)-(5-phospho-D-ribosyl)glycinamide: step 1/2. Part of the phosphoribosylformylglycinamidine synthase complex involved in the purines biosynthetic pathway. Catalyzes the ATP-dependent conversion of formylglycinamide ribonucleotide (FGAR) and glutamine to yield formylglycinamidine ribonucleotide (FGAM) and glutamate. The FGAM synthase complex is composed of three subunits. PurQ produces an ammonia molecule by converting glutamine to glutamate. PurL transfers the ammonia molecule to FGAR to form FGAM in an ATP-dependent manner. PurS interacts with PurQ and PurL and is thought to assist in the transfer of the ammonia molecule from PurQ to PurL. This chain is Phosphoribosylformylglycinamidine synthase subunit PurL, found in Haloquadratum walsbyi (strain DSM 16790 / HBSQ001).